A 1187-amino-acid polypeptide reads, in one-letter code: MIIFATPKVCKGKTRILYFYLSKLFFYVYFFFLIYYSIQKHSYINSTMPIIPLEDDKDDDWILEDEDDPEFQAILQGNSSKGPAQRTLEGSVAAVSTRPQNDKYETIPVPVKINTPTHHAMDFENLKTYIYPTNFEIRDYQYNIVERAFYDNLLVALPTGLGKTFIASTVMLNFLRWFPISKIIFMAPTRPLVAQQIKACCSIAGIPSSKVAILLDKTRRNRAEIWNSRQVFFTTPQVVENDLASGVVNPKSIALLVIDEAHRAKGNYSYNNVVKFINRFSDSYRILALTATPASDVEGVQQIIDNLNISKVEVRTEQSIDIVRHMKRKTVERKTCYPSSEITECIELLAEGITPVLNTAKERGLLDLTDPTRINFLQCMEISRKIVANPTIPEGLKWSNYFILQLLGMVGQCYRRLNIYGIRSFQSYFNEKFLEFKTKWNAKKSTNKLNADFYFSDPITTLMDRVEELSKTLTYGHPKIEALMEELDDFFKNHETAGSRVIIFTEFRESALEIVQCIEKANDNRKPHIFIGQSKEKEKFDVENFGKKKQKGQTKKKKDERPSTRSSSENAQMTGMSQKLQKEIIKKFKKGVFNILVATSIGEEGLDIGEVDLIICYDSTSSPIKNIQRMGRTGRKRDGKVLMLFSSNEESKFDKAMGGYEYIQQHIMKGDFIQLRPQHRMIPDEYKPEAVKQLIQIPEENIELKAEDDEDEIIRIATSYMLGGKGKKGKKANNNSTKKPAKTFFMPDNVETGFKSAATMVRKVGDNKSLAERNKEKTFLDKLVDSDSESEVDKENENVIQEVDKSKNQEQNDHIITELDNTEQSVAGNTKSTTNGTSYSEPENNNQVNQESVTANLDSVARVPEPEVIENSESEEEQISKITHNTPATSVDLSNGPEETSYKIDSVLIDLIDDDFTFSSDTEGDKVEVIDAVSPEVCKLPEKPATPPIRKSLGVKRKVNKTPDPESNSISIPSSTTKKSHNEVTRKVVQDPSTTNKKSLGVKRPRPVSIIDQLKRQKIRSQVIVSRETQSIIEHESRTQSSLPSPRNMSDEISEIDVIIDLDDDDDDDNKVNGHDKSQTTISKVQPIYEFSNKEDEGFLSSSQTRELYKNYYIAIDSSDDIPFYDPVQGFSKIKDTDKFTMGRTGPITHSLRTQRLFQACNAEFDSQLAAQTKDNDKQDYTFILKK.

One can recognise a Helicase ATP-binding domain in the interval 144–311 (IVERAFYDNL…QIIDNLNISK (168 aa)). 157-164 (LPTGLGKT) contacts ATP. The DEAH box signature appears at 259–262 (DEAH). A Helicase C-terminal domain is found at 486–681 (ELDDFFKNHE…FIQLRPQHRM (196 aa)). Disordered stretches follow at residues 542 to 576 (VENF…MTGM), 781 to 848 (DKLV…NNQV), and 941 to 1003 (PEKP…LGVK). Residues 547–556 (KKKQKGQTKK) are compositionally biased toward basic residues. A compositionally biased stretch (polar residues) spans 564–576 (TRSSSENAQMTGM). Over residues 781–817 (DKLVDSDSESEVDKENENVIQEVDKSKNQEQNDHIIT) the composition is skewed to basic and acidic residues. Positions 822–848 (TEQSVAGNTKSTTNGTSYSEPENNNQV) are enriched in polar residues. Positions 967–977 (SNSISIPSSTT) are enriched in low complexity. A compositionally biased stretch (basic and acidic residues) spans 980-989 (SHNEVTRKVV).

This sequence belongs to the DEAD box helicase family. DEAH subfamily. FANCM sub-subfamily. As to quaternary structure, interacts with the MHF histone-fold complex to form the FANCM-MHF complex.

The protein resides in the nucleus. The enzyme catalyses ATP + H2O = ADP + phosphate + H(+). In terms of biological role, ATP-dependent DNA helicase involved in DNA damage repair by homologous recombination and in genome maintenance. Capable of unwinding D-loops. Plays a role in limiting crossover recombinants during mitotic DNA double-strand break (DSB) repair. Component of a FANCM-MHF complex which promotes gene conversion at blocked replication forks, probably by reversal of the stalled fork. The sequence is that of ATP-dependent DNA helicase MPH1 from Candida albicans (strain SC5314 / ATCC MYA-2876) (Yeast).